Consider the following 310-residue polypeptide: UDP-N-acetylenolpyruvoylglucosamine reductase (310 aa).

The region spanning 35-199 (VGGPAQALFT…TSARFRGTPA (165 aa)) is the FAD-binding PCMH-type domain. Arginine 179 is an active-site residue. The active-site Proton donor is the serine 228. Glutamate 298 is an active-site residue.

The protein belongs to the MurB family. Requires FAD as cofactor.

Its subcellular location is the cytoplasm. It carries out the reaction UDP-N-acetyl-alpha-D-muramate + NADP(+) = UDP-N-acetyl-3-O-(1-carboxyvinyl)-alpha-D-glucosamine + NADPH + H(+). The protein operates within cell wall biogenesis; peptidoglycan biosynthesis. Functionally, cell wall formation. The sequence is that of UDP-N-acetylenolpyruvoylglucosamine reductase from Rhodopseudomonas palustris (strain BisB5).